A 419-amino-acid chain; its full sequence is DNA ligase (419 aa).

The tract at residues 1–120 (MLNHFPGHCS…ARQKRGAHTN (120 aa)) is NTD. Residues 121–317 (RGMIPPMLVK…NYHSAHLAKL (197 aa)) are AD domain. Lys151 acts as the N6-AMP-lysine intermediate in catalysis. 3 residues coordinate ATP: Lys151, Glu203, and Phe232. Residue Glu203 participates in a divalent metal cation binding. Glu291 contacts a divalent metal cation. Residues Ile294 and Lys316 each contribute to the ATP site. Residues 318–419 (KPLLDAEFIL…REPINVLEII (102 aa)) form an OB domain region.

The protein belongs to the ATP-dependent DNA ligase family.

The protein resides in the virion. The catalysed reaction is ATP + (deoxyribonucleotide)n-3'-hydroxyl + 5'-phospho-(deoxyribonucleotide)m = (deoxyribonucleotide)n+m + AMP + diphosphate.. Functionally, very low-fidelity DNA ligase that seals nicks in double-stranded DNA during DNA repair. Together with the viral repair DNA polymerase X, fills the single nucleotide gaps generated by the AP endonuclease. It is not essential for viral replication and recombination. Displays a very low adenylation activity towards DNA with 3'-dideoxy- or 3'-amino-terminated nicks compared to regular nick DNA. This chain is DNA ligase, found in African swine fever virus (isolate Tick/South Africa/Pretoriuskop Pr4/1996) (ASFV).